The chain runs to 316 residues: Transaldolase (316 aa).

Lys-131 serves as the catalytic Schiff-base intermediate with substrate.

The protein belongs to the transaldolase family. Type 1 subfamily. Homodimer.

Its subcellular location is the cytoplasm. It catalyses the reaction D-sedoheptulose 7-phosphate + D-glyceraldehyde 3-phosphate = D-erythrose 4-phosphate + beta-D-fructose 6-phosphate. The protein operates within carbohydrate degradation; pentose phosphate pathway; D-glyceraldehyde 3-phosphate and beta-D-fructose 6-phosphate from D-ribose 5-phosphate and D-xylulose 5-phosphate (non-oxidative stage): step 2/3. Its function is as follows. Transaldolase is important for the balance of metabolites in the pentose-phosphate pathway. This chain is Transaldolase, found in Sodalis glossinidius (strain morsitans).